Reading from the N-terminus, the 331-residue chain is Bifunctional nuclease 1 (331 aa).

In terms of domain architecture, BFN spans 126-261; the sequence is CVQNNPRVLR…RIAYNNGLKV (136 aa). The UVR domain maps to 291 to 326; sequence EAQEFDLVRNMLVAAVEERYKDAAQYRDQLFMFRAK.

This sequence belongs to the bifunctional nuclease family.

Its subcellular location is the nucleus. Its function is as follows. Bifunctional nuclease with both RNase and DNase activities. Involved in basal defense response. Participates in abscisic acid-derived callose deposition following infection by a necrotrophic pathogen. The polypeptide is Bifunctional nuclease 1 (BBD1) (Oryza sativa subsp. japonica (Rice)).